Reading from the N-terminus, the 347-residue chain is NADH-ubiquinone oxidoreductase chain 2 (347 aa).

10 helical membrane-spanning segments follow: residues 26 to 46 (WLLAWMGLEMNMLAMIPILTM), 60 to 80 (FLTQATASMLLMMAIMINFML), 96 to 116 (SMALAALMMKLGLAPFHFWVP), 123 to 143 (SLTSGMILLTWQKLAPLSILY), 151 to 171 (ITILTVSGLLSILVGGWGGLN), 178 to 198 (ILAYSSIAHMGWMLIIMPYNP), 200 to 220 (LTILNLLIYILMTLSIFMIMM), 240 to 260 (MMILLTITLLSLGGLPPLSGF), 274 to 294 (DSIILPMSMAMFALLNLYFYM), and 325 to 345 (LLPPLIILSTLTLPLTPFLSI).

Belongs to the complex I subunit 2 family. As to quaternary structure, core subunit of respiratory chain NADH dehydrogenase (Complex I) which is composed of 45 different subunits. Interacts with TMEM242.

It is found in the mitochondrion inner membrane. The enzyme catalyses a ubiquinone + NADH + 5 H(+)(in) = a ubiquinol + NAD(+) + 4 H(+)(out). In terms of biological role, core subunit of the mitochondrial membrane respiratory chain NADH dehydrogenase (Complex I) which catalyzes electron transfer from NADH through the respiratory chain, using ubiquinone as an electron acceptor. Essential for the catalytic activity and assembly of complex I. The polypeptide is NADH-ubiquinone oxidoreductase chain 2 (Dugong dugon (Dugong)).